The primary structure comprises 417 residues: Probable metalloprotease arx1 (417 aa).

This sequence belongs to the peptidase M24 family. Component of the nucleoplasmic and cytoplasmic pre-60S ribosomal particles.

It is found in the cytoplasm. Its subcellular location is the nucleus. Its function is as follows. Probable metalloprotease involved in proper assembly of pre-ribosomal particles during the biogenesis of the 60S ribosomal subunit. Accompanies the pre-60S particles to the cytoplasm. The protein is Probable metalloprotease arx1 (arx1) of Schizosaccharomyces pombe (strain 972 / ATCC 24843) (Fission yeast).